The following is a 103-amino-acid chain: Large ribosomal subunit protein bL21 (103 aa).

The protein belongs to the bacterial ribosomal protein bL21 family. As to quaternary structure, part of the 50S ribosomal subunit. Contacts protein L20.

Functionally, this protein binds to 23S rRNA in the presence of protein L20. This is Large ribosomal subunit protein bL21 from Pasteurella multocida (strain Pm70).